Consider the following 320-residue polypeptide: Acetyl-coenzyme A carboxylase carboxyl transferase subunit alpha (320 aa).

One can recognise a CoA carboxyltransferase C-terminal domain in the interval 42-295; the sequence is IGDKAAQALK…GDAIAEAFND (254 aa).

This sequence belongs to the AccA family. In terms of assembly, acetyl-CoA carboxylase is a heterohexamer composed of biotin carboxyl carrier protein (AccB), biotin carboxylase (AccC) and two subunits each of ACCase subunit alpha (AccA) and ACCase subunit beta (AccD).

The protein resides in the cytoplasm. It catalyses the reaction N(6)-carboxybiotinyl-L-lysyl-[protein] + acetyl-CoA = N(6)-biotinyl-L-lysyl-[protein] + malonyl-CoA. Its pathway is lipid metabolism; malonyl-CoA biosynthesis; malonyl-CoA from acetyl-CoA: step 1/1. In terms of biological role, component of the acetyl coenzyme A carboxylase (ACC) complex. First, biotin carboxylase catalyzes the carboxylation of biotin on its carrier protein (BCCP) and then the CO(2) group is transferred by the carboxyltransferase to acetyl-CoA to form malonyl-CoA. In Nitrobacter hamburgensis (strain DSM 10229 / NCIMB 13809 / X14), this protein is Acetyl-coenzyme A carboxylase carboxyl transferase subunit alpha.